A 309-amino-acid polypeptide reads, in one-letter code: Tagatose-6-phosphate kinase (309 aa).

This sequence belongs to the carbohydrate kinase PfkB family. LacC subfamily.

The catalysed reaction is D-tagatofuranose 6-phosphate + ATP = D-tagatofuranose 1,6-bisphosphate + ADP + H(+). It participates in carbohydrate metabolism; D-tagatose 6-phosphate degradation; D-glyceraldehyde 3-phosphate and glycerone phosphate from D-tagatose 6-phosphate: step 1/2. The sequence is that of Tagatose-6-phosphate kinase from Streptococcus pyogenes serotype M12 (strain MGAS2096).